Reading from the N-terminus, the 268-residue chain is Undecaprenyl-diphosphatase (268 aa).

The next 7 membrane-spanning stretches (helical) occupy residues 42-62, 86-106, 108-128, 158-178, 184-204, 218-238, and 246-266; these read VPGKVFEVVIQLGAILAICVL, AIFVALIPAGLLGVLYHDFIL, VLFTPYVVCAALITGGIAIVV, IALVPGVSRSGATILGALLVG, AAEFSFFLAIPVMLGASVVSL, LIAAGFIAAFISALLVVKWLV, and FTVFGWYRILFGSLLLIYFSL.

It belongs to the UppP family.

The protein resides in the cell inner membrane. The enzyme catalyses di-trans,octa-cis-undecaprenyl diphosphate + H2O = di-trans,octa-cis-undecaprenyl phosphate + phosphate + H(+). Functionally, catalyzes the dephosphorylation of undecaprenyl diphosphate (UPP). Confers resistance to bacitracin. The polypeptide is Undecaprenyl-diphosphatase (Parvibaculum lavamentivorans (strain DS-1 / DSM 13023 / NCIMB 13966)).